The following is an 88-amino-acid chain: Exodeoxyribonuclease 7 small subunit (88 aa).

It belongs to the XseB family. In terms of assembly, heterooligomer composed of large and small subunits.

The protein resides in the cytoplasm. It carries out the reaction Exonucleolytic cleavage in either 5'- to 3'- or 3'- to 5'-direction to yield nucleoside 5'-phosphates.. In terms of biological role, bidirectionally degrades single-stranded DNA into large acid-insoluble oligonucleotides, which are then degraded further into small acid-soluble oligonucleotides. The protein is Exodeoxyribonuclease 7 small subunit of Bordetella bronchiseptica (strain ATCC BAA-588 / NCTC 13252 / RB50) (Alcaligenes bronchisepticus).